Here is a 202-residue protein sequence, read N- to C-terminus: Small ribosomal subunit protein uS4 (202 aa).

In terms of domain architecture, S4 RNA-binding spans 93 to 155; it reads RRLDNVVRRV…ENLKNLYRGV (63 aa).

This sequence belongs to the universal ribosomal protein uS4 family. As to quaternary structure, part of the 30S ribosomal subunit. Contacts protein S5. The interaction surface between S4 and S5 is involved in control of translational fidelity.

Functionally, one of the primary rRNA binding proteins, it binds directly to 16S rRNA where it nucleates assembly of the body of the 30S subunit. Its function is as follows. With S5 and S12 plays an important role in translational accuracy. The polypeptide is Small ribosomal subunit protein uS4 (Rhodopirellula baltica (strain DSM 10527 / NCIMB 13988 / SH1)).